A 247-amino-acid chain; its full sequence is Ribosomal RNA large subunit methyltransferase E (247 aa).

5 residues coordinate S-adenosyl-L-methionine: Gly99, Trp101, Asp123, Asp139, and Asp162. Residue Lys202 is the Proton acceptor of the active site.

Belongs to the class I-like SAM-binding methyltransferase superfamily. RNA methyltransferase RlmE family.

It is found in the cytoplasm. It carries out the reaction uridine(2552) in 23S rRNA + S-adenosyl-L-methionine = 2'-O-methyluridine(2552) in 23S rRNA + S-adenosyl-L-homocysteine + H(+). Functionally, specifically methylates the uridine in position 2552 of 23S rRNA at the 2'-O position of the ribose in the fully assembled 50S ribosomal subunit. The chain is Ribosomal RNA large subunit methyltransferase E from Anaplasma phagocytophilum (strain HZ).